The sequence spans 655 residues: Broad substrate specificity ATP-binding cassette transporter ABCG2 (655 aa).

Residues 1–395 are Cytoplasmic-facing; it reads MSSSNVEVFI…KNLLGNPQAS (395 aa). The 250-residue stretch at 37–286 folds into the ABC transporter domain; it reads LSFHNICYRV…FESAGYHCEA (250 aa). ATP-binding positions include 80–87, 184–190, glutamate 211, and histidine 243; these read GPTGGGKS and RGVSGGE. Threonine 362 carries the post-translational modification Phosphothreonine; by PIM1. Residues 389–651 form the ABC transmembrane type-2 domain; sequence LGNPQASIAQ…TIAYLKLLFL (263 aa). A helical membrane pass occupies residues 396 to 416; sequence IAQIIVTVVLGLVIGAIYFGL. The Extracellular portion of the chain corresponds to 417 to 428; it reads KNDSTGIQNRAG. The chain crosses the membrane as a helical span at residues 429 to 449; the sequence is VLFFLTTNQCFSSVSAVELFV. The Cytoplasmic segment spans residues 450–477; it reads VEKKLFIHEYISGYYRVSSYFLGKLLSD. Residues 478–498 form a helical membrane-spanning segment; it reads LLPMRMLPSIIFTCIVYFMLG. The Extracellular segment spans residues 499–506; it reads LKPKADAF. A helical membrane pass occupies residues 507 to 527; it reads FVMMFTLMMVAYSASSMALAI. Over 528–535 the chain is Cytoplasmic; the sequence is AAGQSVVS. The chain crosses the membrane as a helical span at residues 536-556; it reads VATLLMTICFVFMMIFSGLLV. Topologically, residues 557 to 630 are extracellular; that stretch reads NLTTIASWLS…LSPWGLWKNH (74 aa). A disulfide bond links cysteine 592 and cysteine 608. The N-linked (GlcNAc...) asparagine glycan is linked to asparagine 596. A helical transmembrane segment spans residues 631 to 651; that stretch reads VALACMIVIFLTIAYLKLLFL. Residues 652-655 lie on the Cytoplasmic side of the membrane; the sequence is KKYS.

It belongs to the ABC transporter superfamily. ABCG family. Eye pigment precursor importer (TC 3.A.1.204) subfamily. Homodimer; disulfide-linked. The minimal functional unit is a homodimer, but the major oligomeric form in plasma membrane is a homotetramer with possibility of higher order oligomerization up to homododecamers. Post-translationally, N-glycosylated. Glycosylation-deficient ABCG2 is normally expressed and functional. In terms of processing, phosphorylated. Phosphorylation at Thr-362 by PIM1 is induced by drugs like mitoxantrone and is associated with cells increased drug resistance. It regulates the localization to the plasma membrane, the homooligomerization and therefore, the activity of the transporter. Highly expressed in placenta. Low expression in small intestine, liver and colon. Expressed in brain (at protein level).

The protein resides in the cell membrane. Its subcellular location is the apical cell membrane. The protein localises to the mitochondrion membrane. The enzyme catalyses ATP + H2O + xenobioticSide 1 = ADP + phosphate + xenobioticSide 2.. The catalysed reaction is urate(in) + ATP + H2O = urate(out) + ADP + phosphate + H(+). It carries out the reaction indoxyl sulfate(in) + ATP + H2O = indoxyl sulfate(out) + ADP + phosphate + H(+). It catalyses the reaction sphing-4-enine 1-phosphate(in) + ATP + H2O = sphing-4-enine 1-phosphate(out) + ADP + phosphate + H(+). The enzyme catalyses estrone 3-sulfate(in) + ATP + H2O = estrone 3-sulfate(out) + ADP + phosphate + H(+). The catalysed reaction is dehydroepiandrosterone 3-sulfate(in) + ATP + H2O = dehydroepiandrosterone 3-sulfate(out) + ADP + phosphate + H(+). It carries out the reaction 4-methylumbelliferone sulfate(in) + ATP + H2O = 4-methylumbelliferone sulfate(out) + ADP + phosphate + H(+). It catalyses the reaction 5,7-dimethyl-2-methylamino-4-(3-pyridylmethyl)-1,3-benzothiazol-6-yl beta-D-glucuronate(in) + ATP + H2O = 5,7-dimethyl-2-methylamino-4-(3-pyridylmethyl)-1,3-benzothiazol-6-yl beta-D-glucuronate(out) + ADP + phosphate + H(+). The enzyme catalyses 4-methylumbelliferone beta-D-glucuronate(in) + ATP + H2O = 4-methylumbelliferone beta-D-glucuronate(out) + ADP + phosphate + H(+). The catalysed reaction is 5,7-dimethyl-2-methylamino-4-(3-pyridylmethyl)-1,3-benzothiazol-6-yl sulfate(in) + ATP + H2O = 5,7-dimethyl-2-methylamino-4-(3-pyridylmethyl)-1,3-benzothiazol-6-yl sulfate(out) + ADP + phosphate + H(+). It carries out the reaction 17beta-estradiol 17-O-(beta-D-glucuronate)(in) + ATP + H2O = 17beta-estradiol 17-O-(beta-D-glucuronate)(out) + ADP + phosphate + H(+). It catalyses the reaction methotrexate(in) + ATP + H2O = methotrexate(out) + ADP + phosphate + H(+). The enzyme catalyses riboflavin(in) + ATP + H2O = riboflavin(out) + ADP + phosphate + H(+). The catalysed reaction is pheophorbide a(in) + ATP + H2O = pheophorbide a(out) + ADP + phosphate + H(+). It carries out the reaction itaconate(in) + ATP + H2O = itaconate(out) + ADP + phosphate + H(+). With respect to regulation, specifically inhibited by the fungal toxin fumitremorgin C and Ko143. In terms of biological role, broad substrate specificity ATP-dependent transporter of the ATP-binding cassette (ABC) family that actively extrudes a wide variety of physiological compounds, dietary toxins and xenobiotics from cells. Involved in porphyrin homeostasis, mediating the export of protoporphyrin IX (PPIX) from both mitochondria to cytosol and cytosol to extracellular space, it also functions in the cellular export of heme. Also mediates the efflux of sphingosine-1-P from cells. Acts as a urate exporter functioning in both renal and extrarenal urate excretion. In kidney, it also functions as a physiological exporter of the uremic toxin indoxyl sulfate. Also involved in the excretion of steroids like estrone 3-sulfate/E1S, 3beta-sulfooxy-androst-5-en-17-one/DHEAS, and other sulfate conjugates. Mediates the secretion of the riboflavin and biotin vitamins into milk. Extrudes pheophorbide a, a phototoxic porphyrin catabolite of chlorophyll, reducing its bioavailability. Plays an important role in the exclusion of xenobiotics from the brain. It confers to cells a resistance to multiple drugs and other xenobiotics including mitoxantrone, pheophorbide, camptothecin, methotrexate, azidothymidine, and the anthracyclines daunorubicin and doxorubicin, through the control of their efflux. In placenta, it limits the penetration of drugs from the maternal plasma into the fetus. May play a role in early stem cell self-renewal by blocking differentiation. In inflammatory macrophages, exports itaconate from the cytosol to the extracellular compartment and limits the activation of TFEB-dependent lysosome biogenesis involved in antibacterial innate immune response. This Homo sapiens (Human) protein is Broad substrate specificity ATP-binding cassette transporter ABCG2 (ABCG2).